The following is a 54-amino-acid chain: MARNDIRPIIKLKSTAGTGYTYVTRKNKRNNPDRISLMKYDPVVRKHVEFREER.

Belongs to the bacterial ribosomal protein bL33 family.

This chain is Large ribosomal subunit protein bL33, found in Corynebacterium glutamicum (strain R).